A 211-amino-acid chain; its full sequence is MANAGLQLLGFILASLGWIGSIVSTALPQWKIYSYAGDNIVTAQAIYEGLWMSCVSQSTGQIQCKVFDSLLNLNSTLQATRALMVIGILLGLIAIFVSTIGMKCMRCLEDDEVQKMWMAVIGGIIFVISGLATLVATAWYGNRIVQEFYDPMTPVNARYEFGQALFTGWAAASLCLLGGALLSCSCPRKTTSYPTPRPYPKPTPSSGKDYV.

The Cytoplasmic portion of the chain corresponds to 1-7 (MANAGLQ). The helical transmembrane segment at 8–28 (LLGFILASLGWIGSIVSTALP) threads the bilayer. Residues 29 to 81 (QWKIYSYAGDNIVTAQAIYEGLWMSCVSQSTGQIQCKVFDSLLNLNSTLQATR) lie on the Extracellular side of the membrane. Cys-54 and Cys-64 are joined by a disulfide. A helical transmembrane segment spans residues 82 to 102 (ALMVIGILLGLIAIFVSTIGM). The Cytoplasmic segment spans residues 103–115 (KCMRCLEDDEVQK). The chain crosses the membrane as a helical span at residues 116–136 (MWMAVIGGIIFVISGLATLVA). The Extracellular segment spans residues 137-163 (TAWYGNRIVQEFYDPMTPVNARYEFGQ). A helical transmembrane segment spans residues 164-184 (ALFTGWAAASLCLLGGALLSC). Topologically, residues 185–211 (SCPRKTTSYPTPRPYPKPTPSSGKDYV) are cytoplasmic. Residues 190–211 (TTSYPTPRPYPKPTPSSGKDYV) form a disordered region. The tract at residues 210-211 (YV) is interactions with TJP1, TJP2, TJP3 and PATJ.

It belongs to the claudin family. Can form homo- and heteropolymers with other CLDN. Homopolymers interact with CLDN3, but not CLDN2, homopolymers. Directly interacts with TJP1/ZO-1, TJP2/ZO-2 and TJP3/ZO-3. Interacts with MPDZ and PATJ. Interacts with OCLN, CD81, CLDN4, CLDN6 and CLDN9. In terms of tissue distribution, detected in epididymis (at protein level). Detected in testis and epididymis.

It is found in the cell junction. Its subcellular location is the tight junction. The protein resides in the cell membrane. It localises to the basolateral cell membrane. Claudins function as major constituents of the tight junction complexes that regulate the permeability of epithelia. While some claudin family members play essential roles in the formation of impermeable barriers, others mediate the permeability to ions and small molecules. Often, several claudin family members are coexpressed and interact with each other, and this determines the overall permeability. CLDN1 is required to prevent the paracellular diffusion of small molecules through tight junctions in the epidermis and is required for the normal barrier function of the skin. Required for normal water homeostasis and to prevent excessive water loss through the skin, probably via an indirect effect on the expression levels of other proteins, since CLDN1 itself seems to be dispensable for water barrier formation in keratinocyte tight junctions. The protein is Claudin-1 (Cldn1) of Rattus norvegicus (Rat).